A 268-amino-acid polypeptide reads, in one-letter code: Tryptophan synthase alpha chain (268 aa).

Active-site proton acceptor residues include glutamate 49 and aspartate 60.

This sequence belongs to the TrpA family. In terms of assembly, tetramer of two alpha and two beta chains.

It carries out the reaction (1S,2R)-1-C-(indol-3-yl)glycerol 3-phosphate + L-serine = D-glyceraldehyde 3-phosphate + L-tryptophan + H2O. It participates in amino-acid biosynthesis; L-tryptophan biosynthesis; L-tryptophan from chorismate: step 5/5. Functionally, the alpha subunit is responsible for the aldol cleavage of indoleglycerol phosphate to indole and glyceraldehyde 3-phosphate. The sequence is that of Tryptophan synthase alpha chain from Aliivibrio fischeri (strain MJ11) (Vibrio fischeri).